We begin with the raw amino-acid sequence, 130 residues long: UPF0225 protein CE1570 (130 aa).

Belongs to the UPF0225 family.

The protein is UPF0225 protein CE1570 of Corynebacterium efficiens (strain DSM 44549 / YS-314 / AJ 12310 / JCM 11189 / NBRC 100395).